Consider the following 593-residue polypeptide: Calnexin (593 aa).

A signal peptide spans 1-20 (MEGKWLLCMLLVLGTTIVQA). The Lumenal portion of the chain corresponds to 21 to 482 (HEGHDDDMID…QMIEAAEERP (462 aa)). Ca(2+) is bound by residues serine 75 and aspartate 118. Lysine 138 carries the post-translational modification N6-acetyllysine. A disulfide bridge connects residues cysteine 161 and cysteine 195. Residues tyrosine 165, lysine 167, tyrosine 186, and aspartate 193 each contribute to the an alpha-D-glucoside site. Residues 261-346 (GNLLNDMTPP…AEKPEDWDED (86 aa)) form a disordered region. Positions 277–410 (IEDPEDQKPE…RKIPNPDFFE (134 aa)) are p domain (Extended arm). 5 consecutive repeat copies span residues 279–290 (DPEDQKPEDWDE), 296–307 (DPDAVKPDDWNE), 315–326 (DEEATKPDGWLD), 334–345 (DPDAEKPEDWDE), and 349–359 (GEWEAPQIANP). 4 X approximate repeats stretches follow at residues 279–345 (DPED…DWDE) and 349–406 (GEWE…IPNP). Basic and acidic residues predominate over residues 282 to 320 (DQKPEDWDERPKIPDPDAVKPDDWNEDAPAKIPDEEATK). Over residues 324–346 (WLDDEPEYVPDPDAEKPEDWDED) the composition is skewed to acidic residues. An interaction with PPIB region spans residues 327 to 360 (DEPEYVPDPDAEKPEDWDEDMDGEWEAPQIANPK). Cysteine 361 and cysteine 367 are disulfide-bonded. 3 consecutive repeat copies span residues 368–378 (GVWQRPMIDNP), 382–392 (GKWKPPMIDNP), and 396–406 (GIWKPRKIPNP). Glutamate 426 is an an alpha-D-glucoside binding site. Aspartate 437 lines the Ca(2+) pocket. A helical transmembrane segment spans residues 483-503 (WLWVVYVLTVALPVFLVILFC). Residues cysteine 503 and cysteine 504 are each lipidated (S-palmitoyl cysteine). At 504–593 (CSGKKQSSPV…SPRNRKPRRE (90 aa)) the chain is on the cytoplasmic side. Residues 504 to 593 (CSGKKQSSPV…SPRNRKPRRE (90 aa)) are sufficient to mediate interaction with SGIP1. The tract at residues 511 to 593 (SPVEYKKTDA…SPRNRKPRRE (83 aa)) is disordered. Over residues 526–548 (KEEEEEKEEEKDKGDEEEEGEEK) the composition is skewed to acidic residues. Phosphoserine is present on serine 555. Threonine 563 carries the post-translational modification Phosphothreonine. At serine 565 the chain carries Phosphoserine; by MAPK3. Serine 584 bears the Phosphoserine mark.

The protein belongs to the calreticulin family. As to quaternary structure, interacts with MAPK3/ERK1. Interacts with KCNH2. Associates with ribosomes. Interacts with SGIP1; involved in negative regulation of endocytosis. The palmitoylated form interacts with the ribosome-translocon complex component SSR1, promoting efficient folding of glycoproteins. Interacts with SERPINA2P/SERPINA2 and with the S and Z variants of SERPINA1. Interacts with PPIB. Interacts with ZNRF4. Interacts with SMIM22. Interacts with TMX2. Interacts with TMEM35A/NACHO and CHRNA7. Interacts with reticulophagy regulators RETREG2 and RETREG3. Interacts with DNM1L; may form part of a larger protein complex at the ER-mitochondrial interface during mitochondrial fission. Interacts with ADAM7. Post-translationally, phosphorylated at Ser-565 by MAPK3/ERK1. Phosphorylation by MAPK3/ERK1 increases its association with ribosomes. Palmitoylation by DHHC6 leads to the preferential localization to the perinuclear rough ER. It mediates the association of calnexin with the ribosome-translocon complex (RTC) which is required for efficient folding of glycosylated proteins. In terms of processing, ubiquitinated, leading to proteasomal degradation. Probably ubiquitinated by ZNRF4.

The protein resides in the endoplasmic reticulum membrane. It localises to the mitochondrion membrane. It is found in the melanosome membrane. Functionally, calcium-binding protein that interacts with newly synthesized monoglucosylated glycoproteins in the endoplasmic reticulum. It may act in assisting protein assembly and/or in the retention within the ER of unassembled protein subunits. It seems to play a major role in the quality control apparatus of the ER by the retention of incorrectly folded proteins. Associated with partial T-cell antigen receptor complexes that escape the ER of immature thymocytes, it may function as a signaling complex regulating thymocyte maturation. Additionally it may play a role in receptor-mediated endocytosis at the synapse. This chain is Calnexin (CANX), found in Canis lupus familiaris (Dog).